The following is a 461-amino-acid chain: Acetylornithine aminotransferase, mitochondrial (461 aa).

The tract at residues 36–56 is disordered; that stretch reads YATASQLTHPDPTEDSPSGKM. Residue K312 is modified to N6-(pyridoxal phosphate)lysine.

It belongs to the class-III pyridoxal-phosphate-dependent aminotransferase family. Requires pyridoxal 5'-phosphate as cofactor.

It localises to the mitochondrion matrix. The catalysed reaction is N(2)-acetyl-L-ornithine + 2-oxoglutarate = N-acetyl-L-glutamate 5-semialdehyde + L-glutamate. The protein operates within amino-acid biosynthesis; L-arginine biosynthesis; N(2)-acetyl-L-ornithine from L-glutamate: step 4/4. The protein is Acetylornithine aminotransferase, mitochondrial (arg-8) of Neurospora crassa (strain ATCC 24698 / 74-OR23-1A / CBS 708.71 / DSM 1257 / FGSC 987).